The following is a 279-amino-acid chain: D-aminoacyl-tRNA deacylase (279 aa).

Residues 81–100 (GRKSLTVHHPGNPTEDNSLG) are disordered.

This sequence belongs to the DtdA deacylase family. As to quaternary structure, monomer. Requires Zn(2+) as cofactor.

It catalyses the reaction a D-aminoacyl-tRNA + H2O = a tRNA + a D-alpha-amino acid + H(+). The enzyme catalyses glycyl-tRNA(Ala) + H2O = tRNA(Ala) + glycine + H(+). D-aminoacyl-tRNA deacylase with broad substrate specificity. By recycling D-aminoacyl-tRNA to D-amino acids and free tRNA molecules, this enzyme counteracts the toxicity associated with the formation of D-aminoacyl-tRNA entities in vivo. The polypeptide is D-aminoacyl-tRNA deacylase (Aeropyrum pernix (strain ATCC 700893 / DSM 11879 / JCM 9820 / NBRC 100138 / K1)).